The primary structure comprises 80 residues: CDC42 small effector protein 1 (80 aa).

Residues Cys-10 and Cys-11 are each lipidated (S-palmitoyl cysteine). Positions 30–43 (IGEPMNFVHLTHIG) constitute a CRIB domain. Positions 48–80 (GAGDGLAMTGAVQEQMRSKGNHRDRPWSNSRAL) are disordered.

Belongs to the CDC42SE/SPEC family. In terms of assembly, interacts with CDC42 (in GTP-bound form). Interacts weakly with RAC1 and not at all with RHOA.

The protein localises to the cytoplasm. It localises to the cytoskeleton. Its subcellular location is the cell membrane. Functionally, probably involved in the organization of the actin cytoskeleton by acting downstream of CDC42, inducing actin filament assembly. Alters CDC42-induced cell shape changes. In activated T-cells, may play a role in CDC42-mediated F-actin accumulation at the immunological synapse. May play a role in early contractile events in phagocytosis in macrophages. The protein is CDC42 small effector protein 1 (Cdc42se1) of Mus musculus (Mouse).